We begin with the raw amino-acid sequence, 83 residues long: Protein FAM240A (83 aa).

The protein belongs to the FAM240 family.

In Homo sapiens (Human), this protein is Protein FAM240A.